Here is a 402-residue protein sequence, read N- to C-terminus: Probable sugar efflux transporter (402 aa).

12 consecutive transmembrane segments (helical) span residues 15–35 (VLIMACAGFIFNTTEFVPVAM), 51–71 (GLMMTVYAWTVLIMSLPAMLA), 84–104 (LFIIFIVGHILLVIAWNFWIL), 109–129 (MCIALAHSVFWSITASLVMRI), 137–157 (QALGMLAIGTALATILGLPIG), 168–188 (VTFGIIAVLALSIMFLIIRLL), 209–229 (PLLLWLYVTTAIVISAHFTAY), 245–265 (NFATAVLLVFGFSGIAASLLF), 276–296 (FIVVSMSLLMFSLLLLLFSTE), 297–317 (AIIAMFSLVFIWGIGISCIGL), 333–353 (VATAIYSGIFNAGIGAGALFG), and 365–385 (IGYTGAALGLIGFIIFITTHL).

Belongs to the major facilitator superfamily. SotB (TC 2.A.1.2) family.

Its subcellular location is the cell inner membrane. Involved in the efflux of sugars. The physiological role may be the reduction of the intracellular concentration of toxic sugars or sugar metabolites. This Haemophilus influenzae (strain 86-028NP) protein is Probable sugar efflux transporter.